The sequence spans 476 residues: Adenosylhomocysteinase (476 aa).

3 residues coordinate substrate: Thr-67, Asp-142, and Glu-202. 203 to 205 is an NAD(+) binding site; the sequence is TTT. Substrate contacts are provided by Lys-232 and Asp-236. NAD(+) is bound by residues Asn-237, 266–271, Glu-289, Asn-324, 345–347, and Asn-390; these read GYGDVG and IGH.

This sequence belongs to the adenosylhomocysteinase family. The cofactor is NAD(+).

It is found in the cytoplasm. The enzyme catalyses S-adenosyl-L-homocysteine + H2O = L-homocysteine + adenosine. It participates in amino-acid biosynthesis; L-homocysteine biosynthesis; L-homocysteine from S-adenosyl-L-homocysteine: step 1/1. Its function is as follows. May play a key role in the regulation of the intracellular concentration of adenosylhomocysteine. This is Adenosylhomocysteinase from Synechococcus sp. (strain WH7803).